The sequence spans 121 residues: Large ribosomal subunit protein bL21 (121 aa).

It belongs to the bacterial ribosomal protein bL21 family. Part of the 50S ribosomal subunit. Contacts protein L20.

In terms of biological role, this protein binds to 23S rRNA in the presence of protein L20. The chain is Large ribosomal subunit protein bL21 from Gloeobacter violaceus (strain ATCC 29082 / PCC 7421).